Here is a 364-residue protein sequence, read N- to C-terminus: Phosphoserine aminotransferase (364 aa).

Position 41 (Arg41) interacts with L-glutamate. Pyridoxal 5'-phosphate is bound by residues 75–76 (AS), Trp100, Thr155, and Gln198. N6-(pyridoxal phosphate)lysine is present on Lys199. 239 to 240 (NT) is a pyridoxal 5'-phosphate binding site.

The protein belongs to the class-V pyridoxal-phosphate-dependent aminotransferase family. SerC subfamily. As to quaternary structure, homodimer. It depends on pyridoxal 5'-phosphate as a cofactor.

It localises to the cytoplasm. It carries out the reaction O-phospho-L-serine + 2-oxoglutarate = 3-phosphooxypyruvate + L-glutamate. It catalyses the reaction 4-(phosphooxy)-L-threonine + 2-oxoglutarate = (R)-3-hydroxy-2-oxo-4-phosphooxybutanoate + L-glutamate. It participates in amino-acid biosynthesis; L-serine biosynthesis; L-serine from 3-phospho-D-glycerate: step 2/3. Functionally, catalyzes the reversible conversion of 3-phosphohydroxypyruvate to phosphoserine and of 3-hydroxy-2-oxo-4-phosphonooxybutanoate to phosphohydroxythreonine. The chain is Phosphoserine aminotransferase from Streptococcus thermophilus (strain ATCC BAA-250 / LMG 18311).